The primary structure comprises 304 residues: Uricase (304 aa).

An N-acetylalanine modification is found at alanine 2. N6-acetyllysine; alternate occurs at positions 10 and 23. N6-succinyllysine; alternate occurs at positions 10 and 23. Lysine 23 acts as the Charge relay system in catalysis. N6-acetyllysine is present on residues lysine 27 and lysine 36. Serine 39 and serine 63 each carry phosphoserine. Threonine 68 functions as the Charge relay system in the catalytic mechanism. Threonine 68 and aspartate 69 together coordinate urate. Residues lysine 118, lysine 122, and lysine 164 each carry the N6-acetyllysine modification. Phenylalanine 170 serves as a coordination point for urate. Lysine 175 and lysine 185 each carry N6-acetyllysine. Position 187 (arginine 187) interacts with urate. 2 positions are modified to N6-acetyllysine; alternate: lysine 221 and lysine 228. N6-succinyllysine; alternate occurs at positions 221 and 228. Serine 232 is modified (phosphoserine). Positions 235, 236, and 262 each coordinate urate. Histidine 264 serves as the catalytic Charge relay system. The residue at position 278 (lysine 278) is an N6-acetyllysine. Phosphotyrosine is present on tyrosine 289. A Microbody targeting signal motif is present at residues 302–304; the sequence is SRL.

The protein belongs to the uricase family.

It is found in the peroxisome. The catalysed reaction is urate + O2 + H2O = 5-hydroxyisourate + H2O2. It functions in the pathway purine metabolism; urate degradation; (S)-allantoin from urate: step 1/3. Catalyzes the oxidation of uric acid to 5-hydroxyisourate, which is further processed to form (S)-allantoin. The chain is Uricase (UOX) from Macaca mulatta (Rhesus macaque).